The primary structure comprises 691 residues: MSRTVPIEKQRNIGIMAHIDAGKTTTTERILYYTGVSHKIGETHDGASTMDWMEQEQERGITITSAATTCFWDGYRINIIDTPGHVDFTIEVERSLRVLDGAVAVFDAVAGVEPQSETVWRQANRYGVPRVCFVNKMDRIGANFFRCVDMIQERLRAKPVCLQLPIGAEDNFEGIIDLIHGVSLKFDKETKGLEVERGPIPPELMELYQEKRLEMMEAAAEEDEVLLAKYLEGTELTAEEIIACIRKATIEQRLVPVLCGSAFRNIGVQPLLDAVVQYLPSPLDIPQMVGHNPNSPEEEIVCHCSDKEPLAGLVFKLASDPFIGHLSFFRIYSGFVESGMTVLNTTTEKRERIGRLLKMHANKREDIKWAGAGDIVALVGLKQASTGDTLCDEKRPVILESLDIPEPVIEVAIEPKTKTDRDALSTGLNKLAKEDPSFRVKGNEETGQTLIAGMGELHLEIIVDRLLREFNVNANVGKPQVAYRETITKPGKSDTKYAKQSGGRGQYGHCVIEIEPNPGNGYTFINSISGGVIPKEYIPAIDKGIQDALKSGILAGFPVVDIKVNLVFGSYHEVDSSEQAFYVAGSMAIKDAMHKSNPILLEPIMDVEVVTPDDYLGDVMGDLNGRRGKVQSMEARSGAQAIRAQVPLSEMFGYATELRSRTQGRATFSMQFDHYERVPAAIAEEVIKSRS.

The 276-residue stretch at 8 to 283 (EKQRNIGIMA…AVVQYLPSPL (276 aa)) folds into the tr-type G domain. GTP contacts are provided by residues 17-24 (AHIDAGKT), 81-85 (DTPGH), and 135-138 (NKMD).

It belongs to the TRAFAC class translation factor GTPase superfamily. Classic translation factor GTPase family. EF-G/EF-2 subfamily.

The protein resides in the cytoplasm. Its function is as follows. Catalyzes the GTP-dependent ribosomal translocation step during translation elongation. During this step, the ribosome changes from the pre-translocational (PRE) to the post-translocational (POST) state as the newly formed A-site-bound peptidyl-tRNA and P-site-bound deacylated tRNA move to the P and E sites, respectively. Catalyzes the coordinated movement of the two tRNA molecules, the mRNA and conformational changes in the ribosome. The chain is Elongation factor G from Lawsonia intracellularis (strain PHE/MN1-00).